A 252-amino-acid chain; its full sequence is MPIIQSVERALQILDLFNEQATELKITDISKLMGLSKSTLHSLLKTLQLHGYIDQNPENGKYRLGMKLVERGHFVVGSIDIRQKAKGWLTELSRRTGQTTHLGILDGREGVYIEKIEGKLAAIAYSRIGRRLPVHATAIGKVLIAWLGEAELNALLEGYQYTTFTPATLASREALMSALAQTREQGYALDSEENEQGVRCVAVPVWNHESRVIAALSLSTLTSRVDDAELANFREQLQQAGLALSRALGYPA.

The HTH iclR-type domain occupies 4–66; that stretch reads IQSVERALQI…PENGKYRLGM (63 aa). A DNA-binding region (H-T-H motif) is located at residues 25 to 45; sequence KITDISKLMGLSKSTLHSLLK. The IclR-ED domain maps to 81–250; it reads IRQKAKGWLT…GLALSRALGY (170 aa).

Activity may be controlled by xylonate. Its function is as follows. Involved in regulation of xylonate catabolism. Represses the expression of both yagA and yagEF operons. Binds mainly at a single site within the spacer of the bidirectional transcription units yagA and yagEF. In Escherichia coli (strain K12), this protein is HTH-type transcriptional regulator XynR.